The chain runs to 310 residues: Porphobilinogen deaminase (310 aa).

Residue C242 is modified to S-(dipyrrolylmethanemethyl)cysteine.

Belongs to the HMBS family. In terms of assembly, monomer. It depends on dipyrromethane as a cofactor.

It catalyses the reaction 4 porphobilinogen + H2O = hydroxymethylbilane + 4 NH4(+). It participates in porphyrin-containing compound metabolism; protoporphyrin-IX biosynthesis; coproporphyrinogen-III from 5-aminolevulinate: step 2/4. Functionally, tetrapolymerization of the monopyrrole PBG into the hydroxymethylbilane pre-uroporphyrinogen in several discrete steps. This is Porphobilinogen deaminase from Shewanella baltica (strain OS223).